Here is a 433-residue protein sequence, read N- to C-terminus: Histidine--tRNA ligase (433 aa).

Belongs to the class-II aminoacyl-tRNA synthetase family. In terms of assembly, homodimer.

It is found in the cytoplasm. It catalyses the reaction tRNA(His) + L-histidine + ATP = L-histidyl-tRNA(His) + AMP + diphosphate + H(+). This is Histidine--tRNA ligase from Pseudothermotoga lettingae (strain ATCC BAA-301 / DSM 14385 / NBRC 107922 / TMO) (Thermotoga lettingae).